A 320-amino-acid polypeptide reads, in one-letter code: Polyisoprenyl-teichoic acid--peptidoglycan teichoic acid transferase TagU (320 aa).

Over 1 to 15 (MVSRTERKQHKKRRK) the chain is Cytoplasmic. The chain crosses the membrane as a helical; Signal-anchor for type II membrane protein span at residues 16-36 (WPFWLGGILLVLLLLISGGIF). Over 37–320 (LIYNQVGAVV…SEITGHMQEQ (284 aa)) the chain is Extracellular.

The protein belongs to the LytR/CpsA/Psr (LCP) family.

Its subcellular location is the cell membrane. Its pathway is cell wall biogenesis. Functionally, may catalyze the final step in cell wall teichoic acid biosynthesis, the transfer of the anionic cell wall polymers (APs) from their lipid-linked precursor to the cell wall peptidoglycan (PG). This is Polyisoprenyl-teichoic acid--peptidoglycan teichoic acid transferase TagU from Oceanobacillus iheyensis (strain DSM 14371 / CIP 107618 / JCM 11309 / KCTC 3954 / HTE831).